The chain runs to 550 residues: Glucose-6-phosphate isomerase (550 aa).

The active-site Proton donor is the Glu356. Residues His387 and Lys515 contribute to the active site.

Belongs to the GPI family.

It is found in the cytoplasm. It catalyses the reaction alpha-D-glucose 6-phosphate = beta-D-fructose 6-phosphate. Its pathway is carbohydrate biosynthesis; gluconeogenesis. The protein operates within carbohydrate degradation; glycolysis; D-glyceraldehyde 3-phosphate and glycerone phosphate from D-glucose: step 2/4. In terms of biological role, catalyzes the reversible isomerization of glucose-6-phosphate to fructose-6-phosphate. The protein is Glucose-6-phosphate isomerase of Vibrio campbellii (strain ATCC BAA-1116).